The following is a 415-amino-acid chain: ATP-dependent RNA helicase RhlB (415 aa).

A Q motif motif is present at residues 9–37 (QRFSALPLHPIVRGALAKKGFDFCTPIQA). In terms of domain architecture, Helicase ATP-binding spans 40-218 (LPISLNGRDV…FEDMNEPEYI (179 aa)). An ATP-binding site is contributed by 53–60 (AQTGTGKT). The DEAD box signature appears at 164–167 (DEAD). Residues 241-389 (DKMALLLTLM…VSQYETEALL (149 aa)) form the Helicase C-terminal domain.

It belongs to the DEAD box helicase family. RhlB subfamily. In terms of assembly, component of the RNA degradosome, which is a multiprotein complex involved in RNA processing and mRNA degradation.

It is found in the cytoplasm. It carries out the reaction ATP + H2O = ADP + phosphate + H(+). Its function is as follows. DEAD-box RNA helicase involved in RNA degradation. Has RNA-dependent ATPase activity and unwinds double-stranded RNA. The protein is ATP-dependent RNA helicase RhlB of Haemophilus influenzae (strain ATCC 51907 / DSM 11121 / KW20 / Rd).